A 286-amino-acid chain; its full sequence is UDP-3-O-acyl-N-acetylglucosamine deacetylase (286 aa).

Residues His-79, His-237, and Asp-241 each contribute to the Zn(2+) site. The active-site Proton donor is the His-264.

Belongs to the LpxC family. Requires Zn(2+) as cofactor.

The catalysed reaction is a UDP-3-O-[(3R)-3-hydroxyacyl]-N-acetyl-alpha-D-glucosamine + H2O = a UDP-3-O-[(3R)-3-hydroxyacyl]-alpha-D-glucosamine + acetate. Its pathway is glycolipid biosynthesis; lipid IV(A) biosynthesis; lipid IV(A) from (3R)-3-hydroxytetradecanoyl-[acyl-carrier-protein] and UDP-N-acetyl-alpha-D-glucosamine: step 2/6. Functionally, catalyzes the hydrolysis of UDP-3-O-myristoyl-N-acetylglucosamine to form UDP-3-O-myristoylglucosamine and acetate, the committed step in lipid A biosynthesis. This chain is UDP-3-O-acyl-N-acetylglucosamine deacetylase, found in Chlamydia trachomatis serovar L2 (strain ATCC VR-902B / DSM 19102 / 434/Bu).